The primary structure comprises 82 residues: Colonization factor (82 aa).

The signal sequence occupies residues M1 to A33.

It is found in the secreted. The chain is Colonization factor (cep) from Vibrio cholerae serotype O1 (strain ATCC 39315 / El Tor Inaba N16961).